The chain runs to 705 residues: Putative membrane protein SCO6666 (705 aa).

Transmembrane regions (helical) follow at residues 16–36 (VMLL…GVFG), 144–164 (LHGI…PLLG), 177–197 (NAEL…FGGL), 201–221 (GLPL…LFGF), 232–252 (IQVT…LMLV), 280–300 (LFSG…PSTF), 306–326 (LAVA…LPAL), 360–380 (VAVL…VTGM), 504–524 (ALTV…SVLL), 528–548 (TVAT…WVFQ), 561–581 (LGAL…GLAM), 615–635 (VVTC…TGGF), and 636–656 (SPIL…ATVV).

It belongs to the resistance-nodulation-cell division (RND) (TC 2.A.6) family. MmpL subfamily.

The protein resides in the cell membrane. This is Putative membrane protein SCO6666 from Streptomyces coelicolor (strain ATCC BAA-471 / A3(2) / M145).